The sequence spans 797 residues: Methionine--tRNA ligase, cytoplasmic (797 aa).

Residues Pro-26–Asn-36 carry the 'HIGH' region motif. The short motif at Lys-348–Ser-352 is the 'KMSKS' region element. Lys-351 is an ATP binding site. A disordered region spans residues Asp-601 to Ile-634. The region spanning Thr-635 to Thr-738 is the tRNA-binding domain.

It belongs to the class-I aminoacyl-tRNA synthetase family.

Its subcellular location is the cytoplasm. The protein resides in the cytosol. The catalysed reaction is tRNA(Met) + L-methionine + ATP = L-methionyl-tRNA(Met) + AMP + diphosphate. The protein is Methionine--tRNA ligase, cytoplasmic of Arabidopsis thaliana (Mouse-ear cress).